Here is a 285-residue protein sequence, read N- to C-terminus: Mitochondrial substrate carrier family protein S (285 aa).

Residues 1-9 (MSTERGLKD) are Mitochondrial intermembrane-facing. 3 Solcar repeats span residues 4–87 (ERGL…MKVL), 96–183 (LTVG…CKRY), and 197–283 (LNLP…VIKL). The chain crosses the membrane as a helical span at residues 10-30 (SIAGTVAGAACLFTGHPFDTI). Over 31-61 (RVRLQTSNTPIGIMECFRNTIKYEGFSGLYK) the chain is Mitochondrial matrix. A helical membrane pass occupies residues 62 to 82 (GVTSPLFGMMFETAVLFAGYG). Topologically, residues 83–101 (QMKVLLQKDENTPLTVGQC) are mitochondrial intermembrane. A helical transmembrane segment spans residues 102–122 (AIAGGFAGVGASVVLTPVELV). Residues 123–150 (KCRLQVQTTGPQKYKGSLDCLVQILKEG) lie on the Mitochondrial matrix side of the membrane. Residues 151-172 (GIRGAYRGFTPTIAREFVGNMA) form a helical membrane-spanning segment. At 173 to 199 (FFSTYETCKRYFKNKENKPNDDDELNL) the chain is on the mitochondrial intermembrane side. Residues 200–220 (PALIISGGLGGMAYWTVLYPV) traverse the membrane as a helical segment. The Mitochondrial matrix portion of the chain corresponds to 221 to 258 (DVAKSKIQISEGAGPSPSIVKVLKEIYSKEGVKGLFRG). Residues 259 to 277 (YTPTIIRSFPANAAMFSVY) form a helical membrane-spanning segment. The Mitochondrial intermembrane portion of the chain corresponds to 278–285 (ELVIKLLG).

It belongs to the mitochondrial carrier (TC 2.A.29) family.

The protein resides in the mitochondrion inner membrane. Functionally, mitochondrial solute carriers shuttle metabolites, nucleotides, and cofactors through the mitochondrial inner membrane. Mediates the transport of acylcarnitines of different length across the mitochondrial inner membrane from the cytosol to the mitochondrial matrix for their oxidation by the mitochondrial fatty acid-oxidation pathway. This is Mitochondrial substrate carrier family protein S (mcfS) from Dictyostelium discoideum (Social amoeba).